An 805-amino-acid polypeptide reads, in one-letter code: G-type lectin S-receptor-like serine/threonine-protein kinase SD1-29 (805 aa).

The first 21 residues, 1-21, serve as a signal peptide directing secretion; it reads MGMVLFACLLLLIIFPTCGYA. The region spanning 22–141 is the Bulb-type lectin domain; that stretch reads AINTSSPLSI…VSGNKLWQSF (120 aa). Residues 22 to 428 lie on the Extracellular side of the membrane; sequence AINTSSPLSI…SELAGSSRRK (407 aa). 5 N-linked (GlcNAc...) asparagine glycosylation sites follow: asparagine 24, asparagine 50, asparagine 85, asparagine 91, and asparagine 248. The EGF-like domain maps to 277 to 313; that stretch reads PENPCDLYGRCGPYGLCVRSDPPKCECLKGFVPKSDE. Disulfide bonds link cysteine 281-cysteine 293 and cysteine 287-cysteine 301. Asparagine 319 and asparagine 378 each carry an N-linked (GlcNAc...) asparagine glycan. The PAN domain occupies 332–418; that stretch reads CQAKSSMKTQ…GEFLFIRLAS (87 aa). 2 disulfides stabilise this stretch: cysteine 371–cysteine 392 and cysteine 375–cysteine 381. Residues 429 to 449 traverse the membrane as a helical segment; that stretch reads IIVGTTVSLSIFLILVFAAIM. Residues 450–805 are Cytoplasmic-facing; it reads LWRYRAKQND…EMTESMIQGR (356 aa). One can recognise a Protein kinase domain in the interval 488-773; the sequence is FSPSNKLGQG…DLPVPKQPIF (286 aa). Residues 494–502 and lysine 516 contribute to the ATP site; that span reads LGQGGFGPV. Residues serine 522 and serine 537 each carry the phosphoserine modification. Residues 577–594 form a caM-binding region; it reads CLKFELDWPKRFNIIQGI. Phosphotyrosine is present on tyrosine 600. Catalysis depends on aspartate 613, which acts as the Proton acceptor. A phosphoserine mark is found at serine 617 and serine 630. The residue at position 647 (threonine 647) is a Phosphothreonine. Serine 690 and serine 793 each carry phosphoserine.

This sequence belongs to the protein kinase superfamily. Ser/Thr protein kinase family. In terms of assembly, interacts with PUB9, PUB13, PUB14, PUB29, PUB38, PUB44 and PUB45. Interacts with PBL34, PBL35 and PBL36. In terms of processing, autophosphorylated at Tyr-600. Autophosphorylation at Tyr-600 is required for downstream phosphorylation of the receptor-like cytoplasmic kinase PBL34, PBL35 and PBL36, and activation of plant immunity.

The protein localises to the cell membrane. It catalyses the reaction L-seryl-[protein] + ATP = O-phospho-L-seryl-[protein] + ADP + H(+). The enzyme catalyses L-threonyl-[protein] + ATP = O-phospho-L-threonyl-[protein] + ADP + H(+). The catalysed reaction is L-tyrosyl-[protein] + ATP = O-phospho-L-tyrosyl-[protein] + ADP + H(+). Its function is as follows. S-domain receptor protein kinase involved in lipopolysaccharide (LPS) sensing. Specifically detects LPS of Pseudomonas and Xanthomonas species. LPS are major components of the outer membrane of Gram-negative bacteria and are important microbe-associated molecular patterns (MAMPs) that trigger biphasic production of reactive oxygen species (ROS) and immune responses in plants. Seems to be only partially associated with the second LPS-triggered ROS burst. Mediates defense signaling in response to the medium-chain 3-hydroxy fatty acid 3-OH-C10:0, a pathogen-associated molecular pattern (PAMP) which induces autophosphorylation at Tyr-600. Autophosphorylation at Tyr-600 is required for downstream phosphorylation of the receptor-like cytoplasmic kinase PBL34, PBL35 and PBL36, and activation of plant immunity. (Microbial infection) Targeted by the bacterial type III effector protein tyrosine phosphatase HopAO1 from Pseudomonas syringae. HopAO1 dephosphorylates Tyr-600, which suppresses the immune response. This is G-type lectin S-receptor-like serine/threonine-protein kinase SD1-29 from Arabidopsis thaliana (Mouse-ear cress).